The chain runs to 369 residues: Peptide chain release factor 2 (369 aa).

Residue Gln252 is modified to N5-methylglutamine.

This sequence belongs to the prokaryotic/mitochondrial release factor family. Methylated by PrmC. Methylation increases the termination efficiency of RF2.

The protein resides in the cytoplasm. Peptide chain release factor 2 directs the termination of translation in response to the peptide chain termination codons UGA and UAA. The chain is Peptide chain release factor 2 from Staphylococcus aureus (strain bovine RF122 / ET3-1).